A 444-amino-acid chain; its full sequence is Multidrug resistance protein MdtA (444 aa).

Residues 1 to 20 (MKSQSKRTSRLFVFVGVVVA) form the signal peptide. Polar residues predominate over residues 37–52 (NNTSGAQQSARGQDTS). Disordered stretches follow at residues 37–60 (NNTS…RNTP) and 398–444 (TPRS…AEKS). Residues 406-419 (ANPASAEKAAAEAE) show a composition bias toward low complexity. Residues 435–444 (ARSTTAAEKS) show a composition bias toward polar residues.

It belongs to the membrane fusion protein (MFP) (TC 8.A.1) family. As to quaternary structure, part of a tripartite efflux system composed of MdtA, MdtB and MdtC.

Its subcellular location is the cell inner membrane. In Yersinia pestis bv. Antiqua (strain Antiqua), this protein is Multidrug resistance protein MdtA.